The following is a 285-amino-acid chain: Sulfotransferase 2A6 (285 aa).

Residue 44-49 coordinates 3'-phosphoadenylyl sulfate; that stretch reads KSGTNW. Histidine 99 acts as the Proton acceptor in catalysis. 3'-phosphoadenylyl sulfate is bound by residues arginine 121, serine 129, tyrosine 184, 218 to 223, and 247 to 249; these read SSFQAM and RKG.

The protein belongs to the sulfotransferase 1 family. In terms of assembly, oligomer.

Its subcellular location is the cytoplasm. It localises to the cytosol. The enzyme catalyses an alcohol + 3'-phosphoadenylyl sulfate = an alkyl sulfate + adenosine 3',5'-bisphosphate + H(+). It catalyses the reaction glycolithocholate + 3'-phosphoadenylyl sulfate = sulfoglycolithocholate + adenosine 3',5'-bisphosphate + H(+). The catalysed reaction is taurolithocholate + 3'-phosphoadenylyl sulfate = taurolithocholate 3-sulfate + adenosine 3',5'-bisphosphate + H(+). It carries out the reaction 3beta-hydroxyandrost-5-en-17-one + 3'-phosphoadenylyl sulfate = dehydroepiandrosterone 3-sulfate + adenosine 3',5'-bisphosphate + H(+). In terms of biological role, sulfotransferase that utilizes 3'-phospho-5'-adenylyl sulfate (PAPS) as sulfonate donor to catalyze the sulfonation of the hydroxyl group of hydroxysteroids and bile acids. The chain is Sulfotransferase 2A6 from Mus musculus (Mouse).